The following is a 247-amino-acid chain: MLTVKGLNKSFGENEILKKIDMKIEKGKVIAILGPSGSGKTTLLRCLNALEIPNRGELAFDDFSIDFSKKVKQADILKLRRKSGMVFQAYHLFPHRTALENVMEGPVQVQKRNKEEVRKEAIQLLDKVGLKDKMDLYPFQLSGGQQQRVGIARALAIQPELMLFDEPTSALDPELVGEVLKVIKDLANEGWTMVVVTHEIKFAQEVADEVIFIDGGVIVEQGPPEQIFSAPKEERTQRFLNRILNPL.

The ABC transporter domain occupies Leu-2–Leu-240. Position 34–41 (Gly-34–Thr-41) interacts with ATP.

It belongs to the ABC transporter superfamily. L-cystine importer (TC 3.A.1.3.14) family. In terms of assembly, the complex is composed of two ATP-binding proteins (TcyC), two transmembrane proteins (TcyB) and a solute-binding protein (TcyA).

The protein resides in the cell membrane. Functionally, part of the ABC transporter complex TcyABC involved in L-cystine import. Responsible for energy coupling to the transport system. The polypeptide is L-cystine import ATP-binding protein TcyC (tcyC) (Bacillus subtilis (strain 168)).